Consider the following 766-residue polypeptide: Leucine-rich repeat and fibronectin type III domain-containing protein 1 (766 aa).

Residues 1–31 (MAPGPFSSGLFSPPPAALPFLLLLWAGASRG) form the signal peptide. An LRRNT domain is found at 32-65 (QPCPGRCICQNVAPTLTMLCAKTGLLFVPPAIDR). At 32-536 (QPCPGRCICQ…LRAHFLGGTM (505 aa)) the chain is on the extracellular side. LRR repeat units lie at residues 66–87 (RVVE…DFAN), 90–111 (SLVH…AFAD), 114–135 (ALRA…QLRG), 138–159 (NLRH…AFDA), 163–184 (TVED…AVGQ), 187–208 (NLNT…TFVQ), and 211–232 (KLVR…GLFL). N87 carries an N-linked (GlcNAc...) asparagine glycan. An LRRCT domain is found at 252–298 (NPLHCNCELLWLRRLTREDDLETCATPEHLTDRYFWSIPEEEFLCEP). In terms of domain architecture, Ig-like spans 299-386 (PLITRQAGGR…GEATAPVEVC (88 aa)). Cysteines 321 and 370 form a disulfide. N343 carries an N-linked (GlcNAc...) asparagine glycan. Residues 397–424 (PAAPPPLTEPGSSDIATPGRPGANDSTS) are disordered. One can recognise a Fibronectin type-III domain in the interval 424–520 (SERRLVAAEL…GCVQFTTAGD (97 aa)). A helical transmembrane segment spans residues 537-557 (IIAIGGVIVASVLVFIVLLMI). The Cytoplasmic portion of the chain corresponds to 558-766 (RYKVYGDGDS…STEWMLESTV (209 aa)). Disordered stretches follow at residues 568 to 601 (RRIK…PPAP) and 645 to 742 (LCLL…GEDG). S713 carries the phosphoserine modification. Residues 714 to 727 (YPRRARRTKRHRST) are compositionally biased toward basic residues. The short motif at 763 to 766 (ESTV) is the PDZ-binding element.

This sequence belongs to the LRFN family. Can form heteromeric complexes with LRFN2, LRFN3, LRFN4 and LRFN5. Forms homomeric complexes, but not across cell junctions. Interacts with DLG4. Also interacts with DLG1, DLG2, and DLG3. Interacts with 2 AMPA receptor subunits GRIA1 and GRIA2 and NMDA receptor subunit GRIN1. Glycosylated. As to expression, predominantly expressed in the brain, with a weak, but broad expression in the cerebral cortex and diencephalic nuclei. Also detected in other parts of the central nervous system, including the olfactory bulb, pons, cerebellum, and medulla oblongata, as well as in the peripheral nervous system, such as the ganglia of cranial nerves and the dorsal root ganglion during gestation.

It is found in the membrane. The protein localises to the synapse. It localises to the postsynaptic density membrane. Its function is as follows. Promotes neurite outgrowth in hippocampal neurons. Involved in the regulation and maintenance of excitatory synapses. Induces the clustering of excitatory postsynaptic proteins, including DLG4, DLGAP1, GRIA1 and GRIN1. This is Leucine-rich repeat and fibronectin type III domain-containing protein 1 (Lrfn1) from Mus musculus (Mouse).